The primary structure comprises 664 residues: uncharacterized protein (664 aa).

An N-terminal signal peptide occupies residues methionine 1–asparagine 35. N-linked (GlcNAc...) asparagine glycans are attached at residues asparagine 101 and asparagine 138. 2 Sel1-like repeats span residues alanine 141–serine 178 and leucine 179–phenylalanine 214. Asparagine 221, asparagine 300, and asparagine 371 each carry an N-linked (GlcNAc...) asparagine glycan. 4 Sel1-like repeats span residues alanine 337–aspartate 372, serine 373–asparagine 409, proline 410–serine 441, and valine 442–arginine 477. Asparagine 454 and asparagine 537 each carry an N-linked (GlcNAc...) asparagine glycan. Sel1-like repeat units lie at residues isoleucine 564 to serine 599 and glycine 601 to asparagine 636.

Belongs to the sel-1 family.

This is an uncharacterized protein from Schizosaccharomyces pombe (strain 972 / ATCC 24843) (Fission yeast).